The sequence spans 291 residues: MAEEEDEAPGSCLDVSSESFNPLLALYSPQTPLPFPDIRCFNNLAEYESFLRGGARGRARGAQRGQSRGPGGKRKGRKPEPDPERIERLKQLMLPVEEGKVPVRPRRSRAPKNVLTRMPLHAGSPLGELNRCVQDRIRIRVHIRTFKGLRGVCSGFIVAFDKFWNMAMVDVDETYRKPVLGKAFYNEPQLTLTRLFDRLQLQEPGSHDPAKGRPAGPAETLTAPPSKKSTQPSERAAGPPVEPGPQGHSGNRPKQRRRNRKEKVDYQQVFTRHLKQIFIRGENVLLVHIAE.

Positions 55-84 are disordered; that stretch reads ARGRARGAQRGQSRGPGGKRKGRKPEPDPE. The Sm domain occupies 124 to 199; the sequence is SPLGELNRCV…LTLTRLFDRL (76 aa). The segment at 155-289 is SM; that stretch reads GFIVAFDKFW…RGENVLLVHI (135 aa). Residues 203-266 form a disordered region; sequence EPGSHDPAKG…RRNRKEKVDY (64 aa). The span at 251 to 261 shows a compositional bias: basic residues; the sequence is NRPKQRRRNRK.

This sequence belongs to the snRNP Sm proteins family. Component of the heptameric ring U7 snRNP complex.

It localises to the nucleus. In terms of biological role, component of the U7 snRNP complex that is involved in the histone 3'-end pre-mRNA processing. Increases U7 snRNA levels but not histone 3'-end pre-mRNA processing activity, when overexpressed. Binds specifically to the Sm-binding site of U7 snRNA. The chain is U7 snRNA-associated Sm-like protein LSm11 from Xenopus laevis (African clawed frog).